The primary structure comprises 554 residues: 2-succinyl-5-enolpyruvyl-6-hydroxy-3-cyclohexene-1-carboxylate synthase (554 aa).

Belongs to the TPP enzyme family. MenD subfamily. Homodimer. Mg(2+) is required as a cofactor. It depends on Mn(2+) as a cofactor. Requires thiamine diphosphate as cofactor.

The catalysed reaction is isochorismate + 2-oxoglutarate + H(+) = 5-enolpyruvoyl-6-hydroxy-2-succinyl-cyclohex-3-ene-1-carboxylate + CO2. The protein operates within quinol/quinone metabolism; 1,4-dihydroxy-2-naphthoate biosynthesis; 1,4-dihydroxy-2-naphthoate from chorismate: step 2/7. It participates in quinol/quinone metabolism; menaquinone biosynthesis. Its function is as follows. Catalyzes the thiamine diphosphate-dependent decarboxylation of 2-oxoglutarate and the subsequent addition of the resulting succinic semialdehyde-thiamine pyrophosphate anion to isochorismate to yield 2-succinyl-5-enolpyruvyl-6-hydroxy-3-cyclohexene-1-carboxylate (SEPHCHC). This chain is 2-succinyl-5-enolpyruvyl-6-hydroxy-3-cyclohexene-1-carboxylate synthase, found in Renibacterium salmoninarum (strain ATCC 33209 / DSM 20767 / JCM 11484 / NBRC 15589 / NCIMB 2235).